The sequence spans 359 residues: Phospho-N-acetylmuramoyl-pentapeptide-transferase (359 aa).

The next 10 helical transmembrane spans lie at 3-23 (QILFAAGIALAVSILLTPVLI), 53-73 (GGVAILAGLWAGYWGSHLIGI), 84-104 (GLLVLGLTTALGGVGFLDDFI), 117-137 (TAKLVGQLIAAVAFGILALQF), 156-176 (IATVTMGSVVFVAFCYLLVSA), 187-207 (LDGLAAGSMSLVLGAYVIITF), 231-251 (LALICAAGAGACIGFLWWNAA), 255-275 (IFMGDTGSLALGGMLAGLSIT), 283-303 (VVIGALFVAEAASVVIQVAVF), and 330-350 (VIIRFWLLAAIASAIGLALFY).

The protein belongs to the glycosyltransferase 4 family. MraY subfamily. It depends on Mg(2+) as a cofactor.

Its subcellular location is the cell membrane. The enzyme catalyses UDP-N-acetyl-alpha-D-muramoyl-L-alanyl-gamma-D-glutamyl-meso-2,6-diaminopimeloyl-D-alanyl-D-alanine + di-trans,octa-cis-undecaprenyl phosphate = di-trans,octa-cis-undecaprenyl diphospho-N-acetyl-alpha-D-muramoyl-L-alanyl-D-glutamyl-meso-2,6-diaminopimeloyl-D-alanyl-D-alanine + UMP. The protein operates within cell wall biogenesis; peptidoglycan biosynthesis. Its function is as follows. Catalyzes the initial step of the lipid cycle reactions in the biosynthesis of the cell wall peptidoglycan: transfers peptidoglycan precursor phospho-MurNAc-pentapeptide from UDP-MurNAc-pentapeptide onto the lipid carrier undecaprenyl phosphate, yielding undecaprenyl-pyrophosphoryl-MurNAc-pentapeptide, known as lipid I. The polypeptide is Phospho-N-acetylmuramoyl-pentapeptide-transferase (Rhodococcus jostii (strain RHA1)).